The primary structure comprises 492 residues: G protein-activated inward rectifier potassium channel 1 (492 aa).

Residues 1–72 (MSALRRKLGD…LFTTLVDLKW (72 aa)) lie on the Cytoplasmic side of the membrane. Residues 16 to 35 (STSASGGGLPPPRAAPRGKR) are disordered. The chain crosses the membrane as a helical span at residues 73-97 (RWNLFIFVLTYTVAWLFMASMWWVI). At 98 to 121 (AYMRGDLNKAHDDSYTPCVANVYN) the chain is on the extracellular side. The segment at residues 122 to 133 (FPSAFLFFIETE) is an intramembrane region (helical; Pore-forming). The segment at residues 134–140 (ATIGYGY) is an intramembrane region (pore-forming). A Selectivity filter motif is present at residues 135-140 (TIGYGY). Residues 141-149 (RYITDKCPE) are Extracellular-facing. A helical transmembrane segment spans residues 150-171 (GIILFLFQSILGSIVDAFLIGC). Residues 172–492 (MFIKMSQPKK…LRKMNSDRFT (321 aa)) lie on the Cytoplasmic side of the membrane. Residues 174-201 (IKMSQPKKRAETLMFSEHAAISMRDGKL) are polyphosphoinositide (PIP2)-binding. The interval 452 to 492 (SDPMSQSVADLPPKLQKLSGGGRMEGNLPPKLRKMNSDRFT) is disordered.

It belongs to the inward rectifier-type potassium channel (TC 1.A.2.1) family. KCNJ3 subfamily. In terms of assembly, associates with KCNJ5/GIRK4 or KCNJ6/GIRK2 or KCNJ9/GIRK3 to form a G-protein activated heteromultimer pore-forming unit. The resulting inward current is much larger.

The protein localises to the membrane. The catalysed reaction is K(+)(in) = K(+)(out). Its activity is regulated as follows. Heteromultimer composed of KCNJ3/GIRK1 and KCNJ5/GIRK4 is activated by phosphatidylinositol 4,5 biphosphate (PtdIns(4,5)P2). Functionally, inward rectifier potassium channels are characterized by a greater tendency to allow potassium to flow into the cell rather than out of it. Their voltage dependence is regulated by the concentration of extracellular potassium; as external potassium is raised, the voltage range of the channel opening shifts to more positive voltages. The inward rectification is mainly due to the blockage of outward current by internal magnesium. This potassium channel is controlled by G proteins. This receptor plays a crucial role in regulating the heartbeat. This Gallus gallus (Chicken) protein is G protein-activated inward rectifier potassium channel 1 (KCNJ3).